The chain runs to 168 residues: Small ribosomal subunit protein uS8 (168 aa).

Residues 59-93 (EEYKKMKELAEKSPNPKMKRYLKQLEEYNKGTQYP) form a not found in other S8 sequences region.

This sequence belongs to the universal ribosomal protein uS8 family. In terms of assembly, part of the 30S ribosomal subunit. Contacts proteins S5 and S12.

Functionally, one of the primary rRNA binding proteins, it binds directly to 16S rRNA central domain where it helps coordinate assembly of the platform of the 30S subunit. The protein is Small ribosomal subunit protein uS8 of Aquifex aeolicus (strain VF5).